The sequence spans 278 residues: Diaminopimelate epimerase (278 aa).

Substrate-binding residues include Asn-13 and Asn-66. Cys-75 (proton donor) is an active-site residue. Residues 76-77 (GN), Asn-162, Asn-195, and 213-214 (ER) contribute to the substrate site. The active-site Proton acceptor is Cys-222. 223 to 224 (GT) is a binding site for substrate.

The protein belongs to the diaminopimelate epimerase family. Homodimer.

The protein localises to the cytoplasm. The catalysed reaction is (2S,6S)-2,6-diaminopimelate = meso-2,6-diaminopimelate. The protein operates within amino-acid biosynthesis; L-lysine biosynthesis via DAP pathway; DL-2,6-diaminopimelate from LL-2,6-diaminopimelate: step 1/1. Catalyzes the stereoinversion of LL-2,6-diaminopimelate (L,L-DAP) to meso-diaminopimelate (meso-DAP), a precursor of L-lysine and an essential component of the bacterial peptidoglycan. The chain is Diaminopimelate epimerase from Trichodesmium erythraeum (strain IMS101).